Consider the following 177-residue polypeptide: MQDQAIVAILDGIRWLQEPPVWPDDATRSWLTERGSMTQRLEKHCGKIRVRRYREGFVTACIEAWEAALLPDCGRFWLREVVLYGHDRPWLTARTLVPAAAEAGPAQQVLSLGDVPLGQWLFRHRPPARDVIQFGRVGTLWARRARLRLTEGQPLLLTEAFLPDCPLYISGGDAPQQ.

Substrate is bound by residues M37, R79, L117, and E159.

Belongs to the UbiC family. In terms of assembly, monomer.

The protein localises to the cytoplasm. It catalyses the reaction chorismate = 4-hydroxybenzoate + pyruvate. Its pathway is cofactor biosynthesis; ubiquinone biosynthesis. Removes the pyruvyl group from chorismate, with concomitant aromatization of the ring, to provide 4-hydroxybenzoate (4HB) for the ubiquinone pathway. This Sodalis glossinidius (strain morsitans) protein is Chorismate pyruvate-lyase.